We begin with the raw amino-acid sequence, 115 residues long: NADH-ubiquinone oxidoreductase chain 3 (115 aa).

Transmembrane regions (helical) follow at residues 4–24, 55–75, and 83–103; these read LTAL…AFWL, FFLV…LLPL, and YINI…LGLA.

This sequence belongs to the complex I subunit 3 family. Core subunit of respiratory chain NADH dehydrogenase (Complex I) which is composed of 45 different subunits. Interacts with TMEM186. Interacts with TMEM242.

It localises to the mitochondrion inner membrane. The catalysed reaction is a ubiquinone + NADH + 5 H(+)(in) = a ubiquinol + NAD(+) + 4 H(+)(out). In terms of biological role, core subunit of the mitochondrial membrane respiratory chain NADH dehydrogenase (Complex I) which catalyzes electron transfer from NADH through the respiratory chain, using ubiquinone as an electron acceptor. Essential for the catalytic activity of complex I. The polypeptide is NADH-ubiquinone oxidoreductase chain 3 (Peromyscus polionotus (Oldfield mouse)).